A 453-amino-acid polypeptide reads, in one-letter code: Putative long chain fatty acid-CoA ligase VraA (453 aa).

The protein belongs to the ATP-dependent AMP-binding enzyme family.

The chain is Putative long chain fatty acid-CoA ligase VraA (vraA) from Staphylococcus epidermidis (strain ATCC 35984 / DSM 28319 / BCRC 17069 / CCUG 31568 / BM 3577 / RP62A).